We begin with the raw amino-acid sequence, 538 residues long: NADH-quinone oxidoreductase subunit N (538 aa).

Transmembrane regions (helical) follow at residues 28–48 (LAPVFVLMAGACVAVLVEAFV), 57–77 (QIIVTVATLVVAIASTLTTIA), 94–114 (PTLATWVILLATGLGTVVLFA), 147–167 (HTEVYPLLMFAALGMMCFAAA), 170–190 (LIMMFVALEIFSLPLYLLCGM), 206–226 (FLLGALSSALFLYGIVLLYGC), 249–269 (IVAGMILVAVGLLFKIGAVPF), 288–308 (MAVATKLVALVGLMRVLYVGL), 315–335 (WQIVLAVVAVASMGVGAIVGL), 343–363 (LLAYSAIAHAGFVLVGVVGAW), 380–400 (VLVYMTAYGLASIGFWLLILM), 424–444 (IGVLVVIFVLSFAGIPLTAGF), 458–478 (GYAWLVLIGVLFSLVAAAFYL), and 503–523 (IAGWITLIVCAVFTIVMGVAP).

Belongs to the complex I subunit 2 family. NDH-1 is composed of 14 different subunits. Subunits NuoA, H, J, K, L, M, N constitute the membrane sector of the complex.

It localises to the cell membrane. The catalysed reaction is a quinone + NADH + 5 H(+)(in) = a quinol + NAD(+) + 4 H(+)(out). Functionally, NDH-1 shuttles electrons from NADH, via FMN and iron-sulfur (Fe-S) centers, to quinones in the respiratory chain. The immediate electron acceptor for the enzyme in this species is believed to be a menaquinone. Couples the redox reaction to proton translocation (for every two electrons transferred, four hydrogen ions are translocated across the cytoplasmic membrane), and thus conserves the redox energy in a proton gradient. The sequence is that of NADH-quinone oxidoreductase subunit N from Cutibacterium acnes (strain DSM 16379 / KPA171202) (Propionibacterium acnes).